The primary structure comprises 485 residues: Serine hydroxymethyltransferase, mitochondrial (485 aa).

Lysine 259 bears the N6-(pyridoxal phosphate)lysine mark.

This sequence belongs to the SHMT family. As to quaternary structure, homotetramer. It depends on pyridoxal 5'-phosphate as a cofactor.

Its subcellular location is the mitochondrion. It carries out the reaction (6R)-5,10-methylene-5,6,7,8-tetrahydrofolate + glycine + H2O = (6S)-5,6,7,8-tetrahydrofolate + L-serine. Its pathway is one-carbon metabolism; tetrahydrofolate interconversion. Functionally, interconversion of serine and glycine. The polypeptide is Serine hydroxymethyltransferase, mitochondrial (SHM1) (Candida glabrata (strain ATCC 2001 / BCRC 20586 / JCM 3761 / NBRC 0622 / NRRL Y-65 / CBS 138) (Yeast)).